Consider the following 66-residue polypeptide: Large ribosomal subunit protein bL35 (66 aa).

A compositionally biased stretch (basic residues) spans 1 to 16 (MPKQKTHRASAKRFKR). Residues 1-21 (MPKQKTHRASAKRFKRTGSGG) are disordered.

Belongs to the bacterial ribosomal protein bL35 family.

This Streptococcus sanguinis (strain SK36) protein is Large ribosomal subunit protein bL35.